The primary structure comprises 384 residues: 8-amino-7-oxononanoate synthase (384 aa).

Residue Arg-21 participates in substrate binding. Residue 108–109 coordinates pyridoxal 5'-phosphate; the sequence is GF. His-133 serves as a coordination point for substrate. Positions 179, 207, and 233 each coordinate pyridoxal 5'-phosphate. An N6-(pyridoxal phosphate)lysine modification is found at Lys-236. A substrate-binding site is contributed by Thr-352.

It belongs to the class-II pyridoxal-phosphate-dependent aminotransferase family. BioF subfamily. In terms of assembly, homodimer. Requires pyridoxal 5'-phosphate as cofactor.

It catalyses the reaction 6-carboxyhexanoyl-[ACP] + L-alanine + H(+) = (8S)-8-amino-7-oxononanoate + holo-[ACP] + CO2. It participates in cofactor biosynthesis; biotin biosynthesis. Its function is as follows. Catalyzes the decarboxylative condensation of pimeloyl-[acyl-carrier protein] and L-alanine to produce 8-amino-7-oxononanoate (AON), [acyl-carrier protein], and carbon dioxide. The chain is 8-amino-7-oxononanoate synthase from Escherichia coli O8 (strain IAI1).